Reading from the N-terminus, the 253-residue chain is ATP synthase subunit b 2 (253 aa).

The helical transmembrane segment at 9–27 (VLEIVNFLVLVWLLKRFLY) threads the bilayer.

The protein belongs to the ATPase B chain family. As to quaternary structure, F-type ATPases have 2 components, F(1) - the catalytic core - and F(0) - the membrane proton channel. F(1) has five subunits: alpha(3), beta(3), gamma(1), delta(1), epsilon(1). F(0) has three main subunits: a(1), b(2) and c(10-14). The alpha and beta chains form an alternating ring which encloses part of the gamma chain. F(1) is attached to F(0) by a central stalk formed by the gamma and epsilon chains, while a peripheral stalk is formed by the delta and b chains.

Its subcellular location is the cell inner membrane. In terms of biological role, f(1)F(0) ATP synthase produces ATP from ADP in the presence of a proton or sodium gradient. F-type ATPases consist of two structural domains, F(1) containing the extramembraneous catalytic core and F(0) containing the membrane proton channel, linked together by a central stalk and a peripheral stalk. During catalysis, ATP synthesis in the catalytic domain of F(1) is coupled via a rotary mechanism of the central stalk subunits to proton translocation. Functionally, component of the F(0) channel, it forms part of the peripheral stalk, linking F(1) to F(0). The chain is ATP synthase subunit b 2 from Methylococcus capsulatus (strain ATCC 33009 / NCIMB 11132 / Bath).